The primary structure comprises 290 residues: 4-diphosphocytidyl-2-C-methyl-D-erythritol kinase (290 aa).

Lys-14 is a catalytic residue. Residue 103-113 (PMGGGLGGGSS) coordinates ATP. The active site involves Asp-145.

It belongs to the GHMP kinase family. IspE subfamily. As to quaternary structure, homodimer.

It catalyses the reaction 4-CDP-2-C-methyl-D-erythritol + ATP = 4-CDP-2-C-methyl-D-erythritol 2-phosphate + ADP + H(+). It participates in isoprenoid biosynthesis; isopentenyl diphosphate biosynthesis via DXP pathway; isopentenyl diphosphate from 1-deoxy-D-xylulose 5-phosphate: step 3/6. In terms of biological role, catalyzes the phosphorylation of the position 2 hydroxy group of 4-diphosphocytidyl-2C-methyl-D-erythritol. This chain is 4-diphosphocytidyl-2-C-methyl-D-erythritol kinase, found in Pectobacterium atrosepticum (strain SCRI 1043 / ATCC BAA-672) (Erwinia carotovora subsp. atroseptica).